Consider the following 528-residue polypeptide: Abrin-a (528 aa).

A Pyrrolidone carboxylic acid modification is found at glutamine 1. Glutamate 164 is an active-site residue. Disulfide bonds link cysteine 247–cysteine 269, cysteine 286–cysteine 305, and cysteine 329–cysteine 346. In terms of domain architecture, Ricin B-type lectin 1 spans 273-400; it reads YEPTVRIGGR…YLMRQGWRTG (128 aa). The 1-alpha repeat unit spans residues 283-325; that stretch reads DGMCVDVYDNGYHNGNRIIMWKCKDRLEENQLWTLKSDKTIRS. Residues 326–366 form a 1-beta repeat; that stretch reads NGKCLTTYGYAPGSYVMIYDCTSAVAEATYWEIWDNGTIIN. 2 N-linked (GlcNAc...) asparagine glycosylation sites follow: asparagine 361 and asparagine 401. The 1-gamma repeat unit spans residues 369–401; sequence SALVLSAESSSMGGTLTVQTNEYLMRQGWRTGN. One can recognise a Ricin B-type lectin 2 domain in the interval 403–527; sequence TSPFVTSISG…GKPNQIWLTL (125 aa). One copy of the 2-alpha repeat lies at 414 to 449; it reads SDLCMQAQGSNVWMADCDSNKKEQQWALYTDGSIRS. 2 cysteine pairs are disulfide-bonded: cysteine 417-cysteine 430 and cysteine 456-cysteine 473. The stretch at 453 to 492 is one 2-beta repeat; it reads TNNCLTSKDHKQGSTILLMGCSNGWASQRWVFKNDGSIYS. Residues 495–528 form a 2-gamma repeat; sequence DDMVMDVKGSDPSLKQIILWPYTGKPNQIWLTLF.

The protein in the N-terminal section; belongs to the ribosome-inactivating protein family. Type 2 RIP subfamily. As to quaternary structure, disulfide-linked dimer of A and B chains.

It catalyses the reaction Endohydrolysis of the N-glycosidic bond at one specific adenosine on the 28S rRNA.. Functionally, the A chain is responsible for inhibiting protein synthesis through the catalytic inactivation of 60S ribosomal subunits by removing adenine from position 4,324 of 28S rRNA. Abrin-a is more toxic than ricin. Its function is as follows. The B chain is a galactose-specific lectin that facilitates the binding of abrin to the cell membrane that precedes endocytosis. The sequence is that of Abrin-a from Abrus precatorius (Indian licorice).